The chain runs to 165 residues: 3-isopropylmalate dehydratase small subunit (165 aa).

The protein belongs to the LeuD family. LeuD type 2 subfamily. Heterodimer of LeuC and LeuD.

It carries out the reaction (2R,3S)-3-isopropylmalate = (2S)-2-isopropylmalate. It functions in the pathway amino-acid biosynthesis; L-leucine biosynthesis; L-leucine from 3-methyl-2-oxobutanoate: step 2/4. Its function is as follows. Catalyzes the isomerization between 2-isopropylmalate and 3-isopropylmalate, via the formation of 2-isopropylmaleate. In Saccharolobus islandicus (strain M.16.27) (Sulfolobus islandicus), this protein is 3-isopropylmalate dehydratase small subunit.